The following is a 176-amino-acid chain: MTIYEIKSYLSRPYAEAAFKFANENNIVDDWIYMIEEICKILKNIKIYSLSSFILKKNKNFLFESIKNNFDVYFNNFVKIIIENNRLIIFPEILNQFINLKNDQNNIENITIISKYKLDKKILNKIEKKIKSLIFKEIKINIKIDKSIIGGYIIKSKNFLIDNSIKNKLYRFSEYL.

The protein belongs to the ATPase delta chain family. In terms of assembly, F-type ATPases have 2 components, F(1) - the catalytic core - and F(0) - the membrane proton channel. F(1) has five subunits: alpha(3), beta(3), gamma(1), delta(1), epsilon(1). F(0) has three main subunits: a(1), b(2) and c(10-14). The alpha and beta chains form an alternating ring which encloses part of the gamma chain. F(1) is attached to F(0) by a central stalk formed by the gamma and epsilon chains, while a peripheral stalk is formed by the delta and b chains.

It localises to the cell membrane. F(1)F(0) ATP synthase produces ATP from ADP in the presence of a proton or sodium gradient. F-type ATPases consist of two structural domains, F(1) containing the extramembraneous catalytic core and F(0) containing the membrane proton channel, linked together by a central stalk and a peripheral stalk. During catalysis, ATP synthesis in the catalytic domain of F(1) is coupled via a rotary mechanism of the central stalk subunits to proton translocation. Functionally, this protein is part of the stalk that links CF(0) to CF(1). It either transmits conformational changes from CF(0) to CF(1) or is implicated in proton conduction. This is ATP synthase subunit delta from Wigglesworthia glossinidia brevipalpis.